The primary structure comprises 1722 residues: Signal-induced proliferation-associated 1-like protein 2 (1722 aa).

The span at 1 to 12 shows a compositional bias: basic and acidic residues; it reads MSDPRQSQEEKH. Disordered regions lie at residues 1–29 and 42–72; these read MSDPRQSQEEKHKLGRASSKFKDPPRIMQ and NGNMGPTTSLNASNSNETGGGGPANGTPAVP. Polar residues predominate over residues 45 to 56; it reads MGPTTSLNASNS. A Phosphoserine modification is found at Ser-148. Polar residues predominate over residues 360 to 377; that stretch reads GASAASQTQMPTGQTGNC. Positions 360-401 are disordered; it reads GASAASQTQMPTGQTGNCESPLGSKEDLNSKENLDADEGDGK. Phosphoserine is present on residues Ser-379 and Ser-383. Residues 383–401 are compositionally biased toward basic and acidic residues; it reads SKEDLNSKENLDADEGDGK. In terms of domain architecture, Rap-GAP spans 595–812; the sequence is LLKLDEQGLS…RTRQEYLKDL (218 aa). The 77-residue stretch at 950 to 1026 folds into the PDZ domain; that stretch reads EMTLRRNGLG…VKVVIIQPHD (77 aa). Phosphoserine is present on Ser-1029. Disordered regions lie at residues 1067-1245 and 1330-1360; these read HRVP…FGSG and EGSMGDLSEISSHSSGSHHSGSPSAHCSKSS. Low complexity-rich tracts occupy residues 1093-1102 and 1119-1130; these read QQLLQQAQAA and SSPSNQSSSSDP. 2 stretches are compositionally biased toward basic and acidic residues: residues 1164–1183 and 1194–1217; these read DGAREREDTMEASRHPETKW and YKERALQKDGSCKDSPNKLSHIGD. Low complexity predominate over residues 1219–1236; sequence SCSSHSSSNTLSSNTSSN. The residue at position 1244 (Ser-1244) is a Phosphoserine. Low complexity predominate over residues 1337–1360; the sequence is SEISSHSSGSHHSGSPSAHCSKSS. Phosphoserine occurs at positions 1461, 1472, 1478, 1488, 1549, 1552, and 1591. Residues 1654–1712 adopt a coiled-coil conformation; it reads LTGKVNQLELILRQLQTDLRKEKQDKAVLQAEVQHLRQDNMRLQEESQTATAQLRKFTE.

The protein is Signal-induced proliferation-associated 1-like protein 2 (SIPA1L2) of Homo sapiens (Human).